Reading from the N-terminus, the 428-residue chain is Light-independent protochlorophyllide reductase subunit N (428 aa).

The [4Fe-4S] cluster site is built by cysteine 31, cysteine 56, and cysteine 117.

Belongs to the BchN/ChlN family. In terms of assembly, protochlorophyllide reductase is composed of three subunits; BchL, BchN and BchB. Forms a heterotetramer of two BchB and two BchN subunits. The cofactor is [4Fe-4S] cluster.

The enzyme catalyses chlorophyllide a + oxidized 2[4Fe-4S]-[ferredoxin] + 2 ADP + 2 phosphate = protochlorophyllide a + reduced 2[4Fe-4S]-[ferredoxin] + 2 ATP + 2 H2O. It functions in the pathway porphyrin-containing compound metabolism; bacteriochlorophyll biosynthesis (light-independent). Component of the dark-operative protochlorophyllide reductase (DPOR) that uses Mg-ATP and reduced ferredoxin to reduce ring D of protochlorophyllide (Pchlide) to form chlorophyllide a (Chlide). This reaction is light-independent. The NB-protein (BchN-BchB) is the catalytic component of the complex. The protein is Light-independent protochlorophyllide reductase subunit N of Rhodopseudomonas palustris (strain BisB5).